A 274-amino-acid chain; its full sequence is 2-dehydro-3-deoxyphosphooctonate aldolase (274 aa).

It belongs to the KdsA family.

It is found in the cytoplasm. It catalyses the reaction D-arabinose 5-phosphate + phosphoenolpyruvate + H2O = 3-deoxy-alpha-D-manno-2-octulosonate-8-phosphate + phosphate. Its pathway is carbohydrate biosynthesis; 3-deoxy-D-manno-octulosonate biosynthesis; 3-deoxy-D-manno-octulosonate from D-ribulose 5-phosphate: step 2/3. It participates in bacterial outer membrane biogenesis; lipopolysaccharide biosynthesis. This is 2-dehydro-3-deoxyphosphooctonate aldolase from Rickettsia rickettsii (strain Iowa).